The primary structure comprises 168 residues: Transcription antitermination protein NusB (168 aa).

Belongs to the NusB family.

Involved in transcription antitermination. Required for transcription of ribosomal RNA (rRNA) genes. Binds specifically to the boxA antiterminator sequence of the ribosomal RNA (rrn) operons. This is Transcription antitermination protein NusB from Chlamydia trachomatis serovar A (strain ATCC VR-571B / DSM 19440 / HAR-13).